Consider the following 182-residue polypeptide: DOMON domain-containing protein Y73F4A.1 (182 aa).

An N-terminal signal peptide occupies residues 1–18 (MFVLAIVFAFVFIPSSSS). The region spanning 26-143 (ELVSMNWNVK…CLNWMVVPGG (118 aa)) is the DOMON domain. 2 N-linked (GlcNAc...) asparagine glycosylation sites follow: N47 and N128.

The protein localises to the secreted. In Caenorhabditis elegans, this protein is DOMON domain-containing protein Y73F4A.1.